The chain runs to 405 residues: Acetylornithine/succinyldiaminopimelate aminotransferase (405 aa).

Pyridoxal 5'-phosphate contacts are provided by residues 108–109 (GT) and Phe-141. Position 144 (Arg-144) interacts with N(2)-acetyl-L-ornithine. Pyridoxal 5'-phosphate is bound at residue 226 to 229 (DEVQ). The residue at position 255 (Lys-255) is an N6-(pyridoxal phosphate)lysine. Ser-283 serves as a coordination point for N(2)-acetyl-L-ornithine. Residue Thr-284 participates in pyridoxal 5'-phosphate binding.

It belongs to the class-III pyridoxal-phosphate-dependent aminotransferase family. ArgD subfamily. In terms of assembly, homodimer. The cofactor is pyridoxal 5'-phosphate.

The protein resides in the cytoplasm. It carries out the reaction N(2)-acetyl-L-ornithine + 2-oxoglutarate = N-acetyl-L-glutamate 5-semialdehyde + L-glutamate. The enzyme catalyses N-succinyl-(2S,6S)-2,6-diaminopimelate + 2-oxoglutarate = (S)-2-succinylamino-6-oxoheptanedioate + L-glutamate. It participates in amino-acid biosynthesis; L-arginine biosynthesis; N(2)-acetyl-L-ornithine from L-glutamate: step 4/4. The protein operates within amino-acid biosynthesis; L-lysine biosynthesis via DAP pathway; LL-2,6-diaminopimelate from (S)-tetrahydrodipicolinate (succinylase route): step 2/3. Inhibited by gabaculine (Gcn). In terms of biological role, involved in both the arginine and lysine biosynthetic pathways. In Salmonella typhimurium (strain LT2 / SGSC1412 / ATCC 700720), this protein is Acetylornithine/succinyldiaminopimelate aminotransferase.